We begin with the raw amino-acid sequence, 212 residues long: Stringent starvation protein A (212 aa).

The GST N-terminal domain occupies 9-87 (SVMTLFSGPT…YLDERFPHPP (79 aa)). Residues 92-209 (YPVARGESRL…LTEAEREMRL (118 aa)) enclose the GST C-terminal domain.

It belongs to the GST superfamily. HSP26 family.

Functionally, forms an equimolar complex with the RNA polymerase holoenzyme (RNAP) but not with the core enzyme. This is Stringent starvation protein A (sspA) from Escherichia coli O157:H7.